The primary structure comprises 1054 residues: Trehalose synthase complex regulatory subunit TPS3 (1054 aa).

Positions 112–133 (AANSGIPPANNPVSSGSTAQRP) are disordered. Residues 122 to 132 (NPVSSGSTAQR) are compositionally biased toward polar residues. A phosphoserine mark is found at Ser148, Ser150, and Ser181. Disordered regions lie at residues 155-203 (ASSI…PVSK) and 223-250 (QQQA…SSSN). Polar residues predominate over residues 170 to 182 (LSSSLMKNPNLSF). A compositionally biased stretch (low complexity) spans 235-249 (SGSTAGDSSIASSSS). Position 265 is a phosphothreonine (Thr265). Residues Ser267 and Ser273 each carry the phosphoserine modification. The interval 287-778 (KFGGYSNNAK…SNQETSTVFN (492 aa)) is glycosyltransferase. At Ser960 the chain carries Phosphoserine.

It in the N-terminal section; belongs to the glycosyltransferase 20 family. In terms of assembly, the trehalose synthase complex is composed of the two catalytic subunits TPS1 and TPS2 and at least one of the two regulatory subunits TPS3 or TSL1.

It is found in the cytoplasm. Functionally, regulatory subunit of the trehalose synthase complex that catalyzes the production of trehalose from glucose-6-phosphate and UDP-glucose in a two step process. May stabilize the trehalose synthase complex. In Saccharomyces cerevisiae (strain ATCC 204508 / S288c) (Baker's yeast), this protein is Trehalose synthase complex regulatory subunit TPS3 (TPS3).